The following is a 170-amino-acid chain: Microfibrillar-associated protein 5 (170 aa).

The N-terminal stretch at 1 to 20 (MTFFGPKVLLLLTALIMSSG) is a signal peptide. Positions 30–32 (RGD) match the Cell attachment site motif. The N-linked (GlcNAc...) asparagine glycan is linked to Asn76.

The protein belongs to the MFAP family. Interacts with TGFB2. Interacts with BMP2. Interacts with FBN1 (via N-terminal domain) and FBN2. In terms of processing, forms intermolecular disulfide bonds either with other MAGP-2 molecules or with other components of the microfibrils. As to expression, associated with fibrillin-containing microfibrils of the developing nuchal ligament.

Its subcellular location is the secreted. It localises to the extracellular space. The protein localises to the extracellular matrix. May play a role in hematopoiesis. In the cardiovascular system, could regulate growth factors or participate in cell signaling in maintaining large vessel integrity. Component of the elastin-associated microfibrils. The chain is Microfibrillar-associated protein 5 (MFAP5) from Bos taurus (Bovine).